Reading from the N-terminus, the 274-residue chain is Large ribosomal subunit protein uL2 (274 aa).

2 disordered regions span residues 28 to 55 (APHAPLLEKKSKSGGRNNNGRITTRHVG) and 224 to 274 (VAMN…RRRK).

Belongs to the universal ribosomal protein uL2 family. Part of the 50S ribosomal subunit. Forms a bridge to the 30S subunit in the 70S ribosome.

Functionally, one of the primary rRNA binding proteins. Required for association of the 30S and 50S subunits to form the 70S ribosome, for tRNA binding and peptide bond formation. It has been suggested to have peptidyltransferase activity; this is somewhat controversial. Makes several contacts with the 16S rRNA in the 70S ribosome. The protein is Large ribosomal subunit protein uL2 of Pseudomonas putida (strain GB-1).